We begin with the raw amino-acid sequence, 101 residues long: DNA-binding protein TubR (101 aa).

Homodimer. Dimers bind to DNA, forming a protein-bound filament which may form a helix around the TubZ filament.

Its function is as follows. A DNA-binding protein that is part of the type III plasmid partition system used to ensure correct segregation of the pBM400 plasmid. Binds the plasmid origin of replication, probably cooperatively, forming a ring or short helix with external DNA. Its effect on RNA expression has not been shown. The sequence is that of DNA-binding protein TubR from Priestia megaterium (strain ATCC 12872 / QMB1551) (Bacillus megaterium).